We begin with the raw amino-acid sequence, 102 residues long: Small ribosomal subunit protein uS10 (102 aa).

This sequence belongs to the universal ribosomal protein uS10 family. Part of the 30S ribosomal subunit.

In terms of biological role, involved in the binding of tRNA to the ribosomes. The chain is Small ribosomal subunit protein uS10 from Lacticaseibacillus casei (strain BL23) (Lactobacillus casei).